A 531-amino-acid polypeptide reads, in one-letter code: Laccase-4 (531 aa).

A signal peptide spans 1-19; sequence MLSSITLLPLLAAVSTPAF. Plastocyanin-like domains lie at 23–146, 158–315, and 384–507; these read RNYK…LVIY, VDDA…LHYE, and SLPT…VSSR. Asn-66 is a glycosylation site (N-linked (GlcNAc...) asparagine). Residues His-83 and His-85 each coordinate Cu cation. Cys-104 and Cys-528 are disulfide-bonded. Asn-109 carries an N-linked (GlcNAc...) asparagine glycan. Cu cation-binding residues include His-128 and His-130. N-linked (GlcNAc...) asparagine glycans are attached at residues Asn-186, Asn-231, Asn-280, and Asn-395. Cu cation-binding residues include His-427, His-430, His-432, His-479, Cys-480, and His-481.

Belongs to the multicopper oxidase family. As to quaternary structure, homodimer. It depends on Cu cation as a cofactor. In mycelia, at a higher level than LCC1, LCC2 and LCC3.

It localises to the secreted. It carries out the reaction 4 hydroquinone + O2 = 4 benzosemiquinone + 2 H2O. Its function is as follows. Lignin degradation and detoxification of lignin-derived products. The sequence is that of Laccase-4 (LCC4) from Thanatephorus cucumeris (Black scurf of potato).